The sequence spans 256 residues: Imidazole glycerol phosphate synthase subunit HisF (256 aa).

Residues Asp-11 and Asp-130 contribute to the active site.

The protein belongs to the HisA/HisF family. As to quaternary structure, heterodimer of HisH and HisF.

Its subcellular location is the cytoplasm. It catalyses the reaction 5-[(5-phospho-1-deoxy-D-ribulos-1-ylimino)methylamino]-1-(5-phospho-beta-D-ribosyl)imidazole-4-carboxamide + L-glutamine = D-erythro-1-(imidazol-4-yl)glycerol 3-phosphate + 5-amino-1-(5-phospho-beta-D-ribosyl)imidazole-4-carboxamide + L-glutamate + H(+). The protein operates within amino-acid biosynthesis; L-histidine biosynthesis; L-histidine from 5-phospho-alpha-D-ribose 1-diphosphate: step 5/9. Its function is as follows. IGPS catalyzes the conversion of PRFAR and glutamine to IGP, AICAR and glutamate. The HisF subunit catalyzes the cyclization activity that produces IGP and AICAR from PRFAR using the ammonia provided by the HisH subunit. The protein is Imidazole glycerol phosphate synthase subunit HisF of Prochlorococcus marinus (strain MIT 9312).